A 186-amino-acid chain; its full sequence is Coiled-coil domain-containing protein ORF13 (186 aa).

Coiled-coil stretches lie at residues 2–30 and 63–85; these read GIKEKEIELETLKREIAQAEASLEQDFIK and LREKLTDKVSKAMDLSDEIQRDK.

The sequence is that of Coiled-coil domain-containing protein ORF13 from Helicobacter pylori (strain 35A).